The primary structure comprises 121 residues: MLKCTTRHVHIFAGEVTADNNFVPRDDLFTLDVDPDNELVWTDAALQKVYARFEELVEEYRGRDLTEYNIRRIGSDLEHFIRSLLKQGEIAYNLQGRAPNFSMGFPQIPAEEIVGQYIPKG.

Belongs to the complex I NdhM subunit family. As to quaternary structure, NDH-1 can be composed of about 15 different subunits; different subcomplexes with different compositions have been identified which probably have different functions.

Its subcellular location is the cellular thylakoid membrane. It carries out the reaction a plastoquinone + NADH + (n+1) H(+)(in) = a plastoquinol + NAD(+) + n H(+)(out). The enzyme catalyses a plastoquinone + NADPH + (n+1) H(+)(in) = a plastoquinol + NADP(+) + n H(+)(out). NDH-1 shuttles electrons from an unknown electron donor, via FMN and iron-sulfur (Fe-S) centers, to quinones in the respiratory and/or the photosynthetic chain. The immediate electron acceptor for the enzyme in this species is believed to be plastoquinone. Couples the redox reaction to proton translocation, and thus conserves the redox energy in a proton gradient. Cyanobacterial NDH-1 also plays a role in inorganic carbon-concentration. In Synechococcus sp. (strain JA-2-3B'a(2-13)) (Cyanobacteria bacterium Yellowstone B-Prime), this protein is NAD(P)H-quinone oxidoreductase subunit M.